The following is a 121-amino-acid chain: Ribulose bisphosphate carboxylase small subunit (121 aa).

This sequence belongs to the RuBisCO small chain family. As to quaternary structure, heterohexadecamer of 8 large and 8 small subunits.

RuBisCO catalyzes two reactions: the carboxylation of D-ribulose 1,5-bisphosphate, the primary event in carbon dioxide fixation, as well as the oxidative fragmentation of the pentose substrate. Both reactions occur simultaneously and in competition at the same active site. Although the small subunit is not catalytic it is essential for maximal activity. The protein is Ribulose bisphosphate carboxylase small subunit of Alvinoconcha hessleri symbiotic bacterium.